A 1124-amino-acid polypeptide reads, in one-letter code: Eukaryotic translation initiation factor 3 subunit A (1124 aa).

Residues 96 to 124 are a coiled coil; sequence LKMAEERTEQAQQQSSQATVDIDDLDNLA. The region spanning 317–498 is the PCI domain; it reads IQRMTTHVLI…ECVHFGTDLS (182 aa). Basic and acidic residues-rich tracts occupy residues 812–851 and 860–883; these read EERR…RQLA and EVER…ERRP. The tract at residues 812–1124 is disordered; that stretch reads EERRRIEEEL…EEGWTDVKHR (313 aa). Positions 900-910 are enriched in low complexity; the sequence is PAAAAPANPAA. 4 stretches are compositionally biased toward basic and acidic residues: residues 928–952, 960–990, 1007–1048, and 1063–1100; these read PRER…EKDG, RGGD…DRGP, PRRD…RGGG, and DDNR…EARP.

Belongs to the eIF-3 subunit A family. In terms of assembly, component of the eukaryotic translation initiation factor 3 (eIF-3) complex.

The protein resides in the cytoplasm. Its function is as follows. RNA-binding component of the eukaryotic translation initiation factor 3 (eIF-3) complex, which is involved in protein synthesis of a specialized repertoire of mRNAs and, together with other initiation factors, stimulates binding of mRNA and methionyl-tRNAi to the 40S ribosome. The eIF-3 complex specifically targets and initiates translation of a subset of mRNAs involved in cell proliferation. The sequence is that of Eukaryotic translation initiation factor 3 subunit A from Anopheles gambiae (African malaria mosquito).